Consider the following 90-residue polypeptide: Probable Fe(2+)-trafficking protein (90 aa).

It belongs to the Fe(2+)-trafficking protein family. Monomer.

Functionally, could be a mediator in iron transactions between iron acquisition and iron-requiring processes, such as synthesis and/or repair of Fe-S clusters in biosynthetic enzymes. This is Probable Fe(2+)-trafficking protein from Proteus mirabilis (strain HI4320).